The chain runs to 320 residues: Cytochrome c biogenesis protein CcsA (320 aa).

A run of 8 helical transmembrane segments spans residues 9–29 (ILAH…WGTL), 36–56 (LSSS…GLLI), 70–90 (LYES…LLEV), 97–117 (WLGA…TLGL), 143–163 (ILFS…LLVI), 227–247 (AIGL…IWAN), 254–274 (WSWD…AIYL), and 288–308 (AIVA…VNLL).

Belongs to the CcmF/CycK/Ccl1/NrfE/CcsA family. May interact with Ccs1.

It localises to the plastid. The protein localises to the chloroplast thylakoid membrane. Functionally, required during biogenesis of c-type cytochromes (cytochrome c6 and cytochrome f) at the step of heme attachment. The chain is Cytochrome c biogenesis protein CcsA from Pinus thunbergii (Japanese black pine).